A 187-amino-acid polypeptide reads, in one-letter code: Elongation factor P (187 aa).

It belongs to the elongation factor P family.

The protein resides in the cytoplasm. It functions in the pathway protein biosynthesis; polypeptide chain elongation. Involved in peptide bond synthesis. Stimulates efficient translation and peptide-bond synthesis on native or reconstituted 70S ribosomes in vitro. Probably functions indirectly by altering the affinity of the ribosome for aminoacyl-tRNA, thus increasing their reactivity as acceptors for peptidyl transferase. This chain is Elongation factor P, found in Corynebacterium glutamicum (strain R).